The chain runs to 125 residues: Histone H1-like protein Hc1 (125 aa).

Positions 98 to 125 (TKAKVKPTKKAAPKTKVKTAKKTRSTKK) are disordered. Over residues 100–125 (AKVKPTKKAAPKTKVKTAKKTRSTKK) the composition is skewed to basic residues.

Belongs to the histone H1/H5 family. HCT subfamily.

Might have a role analogous to that of eukaryotic histone proteins. In Chlamydia trachomatis serovar L2 (strain ATCC VR-902B / DSM 19102 / 434/Bu), this protein is Histone H1-like protein Hc1 (hctA).